The primary structure comprises 387 residues: Alkanesulfonate monooxygenase (387 aa).

The protein belongs to the SsuD family.

The enzyme catalyses an alkanesulfonate + FMNH2 + O2 = an aldehyde + FMN + sulfite + H2O + 2 H(+). Functionally, catalyzes the desulfonation of aliphatic sulfonates. The polypeptide is Alkanesulfonate monooxygenase (Cupriavidus pinatubonensis (strain JMP 134 / LMG 1197) (Cupriavidus necator (strain JMP 134))).